Reading from the N-terminus, the 296-residue chain is tRNA dimethylallyltransferase (296 aa).

2–9 lines the ATP pocket; the sequence is GPTASGKT. 4–9 contacts substrate; it reads TASGKT. 3 interaction with substrate tRNA regions span residues 27-30, 151-155, and 232-237; these read DSAL, QRLSR, and RCVGYR.

The protein belongs to the IPP transferase family. Monomer. Mg(2+) serves as cofactor.

It carries out the reaction adenosine(37) in tRNA + dimethylallyl diphosphate = N(6)-dimethylallyladenosine(37) in tRNA + diphosphate. In terms of biological role, catalyzes the transfer of a dimethylallyl group onto the adenine at position 37 in tRNAs that read codons beginning with uridine, leading to the formation of N6-(dimethylallyl)adenosine (i(6)A). This chain is tRNA dimethylallyltransferase, found in Shewanella woodyi (strain ATCC 51908 / MS32).